The primary structure comprises 402 residues: Phosphoglycerate kinase (402 aa).

Residues 24–26 (DFN), R40, 63–66 (HFGR), R122, and R155 each bind substrate. Residues K206, G297, E328, and 357 to 360 (GGDS) contribute to the ATP site.

This sequence belongs to the phosphoglycerate kinase family. In terms of assembly, monomer.

It is found in the cytoplasm. It carries out the reaction (2R)-3-phosphoglycerate + ATP = (2R)-3-phospho-glyceroyl phosphate + ADP. The protein operates within carbohydrate degradation; glycolysis; pyruvate from D-glyceraldehyde 3-phosphate: step 2/5. In Synechococcus sp. (strain WH7803), this protein is Phosphoglycerate kinase.